A 292-amino-acid polypeptide reads, in one-letter code: ATP synthase gamma chain (292 aa).

This sequence belongs to the ATPase gamma chain family. In terms of assembly, F-type ATPases have 2 components, CF(1) - the catalytic core - and CF(0) - the membrane proton channel. CF(1) has five subunits: alpha(3), beta(3), gamma(1), delta(1), epsilon(1). CF(0) has three main subunits: a, b and c.

It localises to the cell membrane. Produces ATP from ADP in the presence of a proton gradient across the membrane. The gamma chain is believed to be important in regulating ATPase activity and the flow of protons through the CF(0) complex. This Streptococcus mutans serotype c (strain ATCC 700610 / UA159) protein is ATP synthase gamma chain.